Consider the following 54-residue polypeptide: Large ribosomal subunit protein bL33 (54 aa).

It belongs to the bacterial ribosomal protein bL33 family.

This is Large ribosomal subunit protein bL33 from Symbiobacterium thermophilum (strain DSM 24528 / JCM 14929 / IAM 14863 / T).